We begin with the raw amino-acid sequence, 560 residues long: uncharacterized protein (560 aa).

In terms of domain architecture, ABC transmembrane type-1 spans 1 to 281 (MLWNWVALVG…LGSFFHVAMN (281 aa)). The next 7 membrane-spanning stretches (helical) occupy residues 2 to 22 (LWNW…SYIL), 32 to 52 (LLSA…RAFA), 108 to 128 (IYFG…LTLF), 138 to 160 (TAII…NKIA), 168 to 188 (WSIY…LITL), 223 to 243 (VSLM…TALL), and 249 to 269 (QLSV…FIPL). The region spanning 314-547 (VEIKDLHFSY…QGAYAEMFQQ (234 aa)) is the ABC transporter domain. Position 347 to 354 (347 to 354 (GKSGCGKS)) interacts with ATP.

Belongs to the ABC transporter superfamily.

The protein localises to the cell inner membrane. This is an uncharacterized protein from Haemophilus influenzae (strain ATCC 51907 / DSM 11121 / KW20 / Rd).